The following is a 293-amino-acid chain: NAD kinase (293 aa).

Residue D73 is the Proton acceptor of the active site. NAD(+) is bound by residues 73-74 (DG), H78, 147-148 (ND), R158, R175, D177, 188-193 (TAYALS), and Q248.

This sequence belongs to the NAD kinase family. It depends on a divalent metal cation as a cofactor.

Its subcellular location is the cytoplasm. It catalyses the reaction NAD(+) + ATP = ADP + NADP(+) + H(+). Functionally, involved in the regulation of the intracellular balance of NAD and NADP, and is a key enzyme in the biosynthesis of NADP. Catalyzes specifically the phosphorylation on 2'-hydroxyl of the adenosine moiety of NAD to yield NADP. In Nitrosococcus oceani (strain ATCC 19707 / BCRC 17464 / JCM 30415 / NCIMB 11848 / C-107), this protein is NAD kinase.